Reading from the N-terminus, the 397-residue chain is Acetate kinase 2 (397 aa).

Asparagine 10 provides a ligand contact to Mg(2+). Lysine 17 is a binding site for ATP. Residue arginine 90 participates in substrate binding. Aspartate 147 serves as the catalytic Proton donor/acceptor. ATP contacts are provided by residues 207–211 (HLGNG), 281–283 (DAR), and 329–333 (GIGEN). Glutamate 385 contributes to the Mg(2+) binding site.

Belongs to the acetokinase family. Homodimer. Mg(2+) serves as cofactor. Requires Mn(2+) as cofactor.

It is found in the cytoplasm. The catalysed reaction is acetate + ATP = acetyl phosphate + ADP. It functions in the pathway metabolic intermediate biosynthesis; acetyl-CoA biosynthesis; acetyl-CoA from acetate: step 1/2. In terms of biological role, catalyzes the formation of acetyl phosphate from acetate and ATP. Can also catalyze the reverse reaction. This is Acetate kinase 2 from Aliivibrio fischeri (strain ATCC 700601 / ES114) (Vibrio fischeri).